A 271-amino-acid polypeptide reads, in one-letter code: Phosphatidylglycerol--prolipoprotein diacylglyceryl transferase (271 aa).

Transmembrane regions (helical) follow at residues tryptophan 25–valine 45, tyrosine 60–tyrosine 80, phenylalanine 103–leucine 123, tryptophan 134–glycine 154, proline 181–alanine 201, glycine 209–tyrosine 229, and glycine 235–isoleucine 255. An a 1,2-diacyl-sn-glycero-3-phospho-(1'-sn-glycerol)-binding site is contributed by arginine 152.

The protein belongs to the Lgt family.

It localises to the cell inner membrane. The catalysed reaction is L-cysteinyl-[prolipoprotein] + a 1,2-diacyl-sn-glycero-3-phospho-(1'-sn-glycerol) = an S-1,2-diacyl-sn-glyceryl-L-cysteinyl-[prolipoprotein] + sn-glycerol 1-phosphate + H(+). It functions in the pathway protein modification; lipoprotein biosynthesis (diacylglyceryl transfer). Its function is as follows. Catalyzes the transfer of the diacylglyceryl group from phosphatidylglycerol to the sulfhydryl group of the N-terminal cysteine of a prolipoprotein, the first step in the formation of mature lipoproteins. The polypeptide is Phosphatidylglycerol--prolipoprotein diacylglyceryl transferase (Campylobacter jejuni subsp. jejuni serotype O:6 (strain 81116 / NCTC 11828)).